We begin with the raw amino-acid sequence, 349 residues long: Histidinol-phosphate aminotransferase (349 aa).

Lys210 carries the post-translational modification N6-(pyridoxal phosphate)lysine.

It belongs to the class-II pyridoxal-phosphate-dependent aminotransferase family. Histidinol-phosphate aminotransferase subfamily. As to quaternary structure, homodimer. Requires pyridoxal 5'-phosphate as cofactor.

The enzyme catalyses L-histidinol phosphate + 2-oxoglutarate = 3-(imidazol-4-yl)-2-oxopropyl phosphate + L-glutamate. Its pathway is amino-acid biosynthesis; L-histidine biosynthesis; L-histidine from 5-phospho-alpha-D-ribose 1-diphosphate: step 7/9. This is Histidinol-phosphate aminotransferase from Flavobacterium johnsoniae (strain ATCC 17061 / DSM 2064 / JCM 8514 / BCRC 14874 / CCUG 350202 / NBRC 14942 / NCIMB 11054 / UW101) (Cytophaga johnsonae).